Reading from the N-terminus, the 634-residue chain is Chaperone protein HtpG (634 aa).

The interval 1–343 (MTEAENRVTL…SDSLPLNVSR (343 aa)) is a; substrate-binding. The b stretch occupies residues 344–560 (EILQENKQLE…SYGMSRTMER (217 aa)). The tract at residues 561–634 (IMKSAGQNIP…KLNGLLQSLL (74 aa)) is c.

It belongs to the heat shock protein 90 family. In terms of assembly, homodimer.

The protein resides in the cytoplasm. In terms of biological role, molecular chaperone. Has ATPase activity. The sequence is that of Chaperone protein HtpG from Methylococcus capsulatus (strain ATCC 33009 / NCIMB 11132 / Bath).